Reading from the N-terminus, the 193-residue chain is Xanthine phosphoribosyltransferase (193 aa).

Xanthine is bound by residues Leu-20 and Thr-27. Residue 128–132 (ANGQA) participates in 5-phospho-alpha-D-ribose 1-diphosphate binding. Lys-156 is a xanthine binding site.

It belongs to the purine/pyrimidine phosphoribosyltransferase family. Xpt subfamily. As to quaternary structure, homodimer.

The protein localises to the cytoplasm. The catalysed reaction is XMP + diphosphate = xanthine + 5-phospho-alpha-D-ribose 1-diphosphate. Its pathway is purine metabolism; XMP biosynthesis via salvage pathway; XMP from xanthine: step 1/1. In terms of biological role, converts the preformed base xanthine, a product of nucleic acid breakdown, to xanthosine 5'-monophosphate (XMP), so it can be reused for RNA or DNA synthesis. The sequence is that of Xanthine phosphoribosyltransferase from Streptococcus pneumoniae serotype 4 (strain ATCC BAA-334 / TIGR4).